Here is a 510-residue protein sequence, read N- to C-terminus: ATP synthase subunit alpha (510 aa).

169-176 (GDRQTGKT) provides a ligand contact to ATP.

It belongs to the ATPase alpha/beta chains family. F-type ATPases have 2 components, CF(1) - the catalytic core - and CF(0) - the membrane proton channel. CF(1) has five subunits: alpha(3), beta(3), gamma(1), delta(1), epsilon(1). CF(0) has three main subunits: a(1), b(2) and c(9-12). The alpha and beta chains form an alternating ring which encloses part of the gamma chain. CF(1) is attached to CF(0) by a central stalk formed by the gamma and epsilon chains, while a peripheral stalk is formed by the delta and b chains.

The protein localises to the cell inner membrane. The enzyme catalyses ATP + H2O + 4 H(+)(in) = ADP + phosphate + 5 H(+)(out). Produces ATP from ADP in the presence of a proton gradient across the membrane. The alpha chain is a regulatory subunit. This chain is ATP synthase subunit alpha, found in Rickettsia felis (strain ATCC VR-1525 / URRWXCal2) (Rickettsia azadi).